Consider the following 286-residue polypeptide: Translocon-associated protein subunit alpha (286 aa).

The signal sequence occupies residues 1–23 (MRVLPRLLLLLLLAFPAAVLLRG). The Lumenal segment spans residues 24–207 (GPGGSLVAAQ…EREDGLDGET (184 aa)). Residues 37 to 75 (EDEETVEDSIIEDEDDEAEVEEDEPTDLAEDKEEEDVSG) show a composition bias toward acidic residues. The tract at residues 37-83 (EDEETVEDSIIEDEDDEAEVEEDEPTDLAEDKEEEDVSGEPEASPSA) is disordered. N-linked (GlcNAc...) asparagine glycosylation is found at N136 and N191. A helical membrane pass occupies residues 208–228 (IFMYMFLAGLGLLVVVGLHQL). Residues 229–286 (LESRKRKRPIQKVEMGTSSQNDVDMSWIPQETLNQINKASPRRLPRKRAQKRSVGSDE) lie on the Cytoplasmic side of the membrane. S247 bears the Phosphoserine mark. At T260 the chain carries Phosphothreonine. Residues 261 to 286 (LNQINKASPRRLPRKRAQKRSVGSDE) form a disordered region. S268 is subject to Phosphoserine. A compositionally biased stretch (basic residues) spans 268–279 (SPRRLPRKRAQK).

It belongs to the TRAP-alpha family. Heterotetramer of TRAP-alpha, TRAP-beta, TRAP-delta and TRAP-gamma. Interacts with palmitoylated calnexin (CALX), the interaction is required for efficient folding of glycosylated proteins. Post-translationally, phosphorylated in its cytoplasmic tail.

It localises to the endoplasmic reticulum membrane. Its function is as follows. TRAP proteins are part of a complex whose function is to bind calcium to the ER membrane and thereby regulate the retention of ER resident proteins. May be involved in the recycling of the translocation apparatus after completion of the translocation process or may function as a membrane-bound chaperone facilitating folding of translocated proteins. The sequence is that of Translocon-associated protein subunit alpha (SSR1) from Canis lupus familiaris (Dog).